A 332-amino-acid polypeptide reads, in one-letter code: T-cell surface glycoprotein CD1c1 (332 aa).

The first 17 residues, M1–I17, serve as a signal peptide directing secretion. Topologically, residues T18–S300 are extracellular. Residues N25, N38, N75, and N146 are each glycosylated (N-linked (GlcNAc...) asparagine). Cystine bridges form between C120–C184 and C224–C279. The region spanning P205–I292 is the Ig-like domain. A helical transmembrane segment spans residues V301 to L321. Topologically, residues Y322–Q332 are cytoplasmic.

As to quaternary structure, heterodimer with B2M (beta-2-microglobulin).

The protein localises to the cell membrane. The protein resides in the endosome membrane. Its function is as follows. Antigen-presenting protein that binds self and non-self lipid and glycolipid antigens and presents them to T-cell receptors on natural killer T-cells. This chain is T-cell surface glycoprotein CD1c1 (CD1C1), found in Cavia porcellus (Guinea pig).